The following is a 647-amino-acid chain: Microtubule-associated protein 9 (647 aa).

Ser-2 is subject to N-acetylserine. Tyr-12 is modified (phosphotyrosine). Disordered stretches follow at residues 127 to 323 (KSFS…ELIM), 344 to 421 (SATA…PDRA), 491 to 514 (KRLE…EALQ), 530 to 553 (KNRK…AEKK), 580 to 600 (NEKR…KQAI), and 613 to 647 (QERI…AKVF). A compositionally biased stretch (basic and acidic residues) spans 133–145 (QNKDEEFEKDKIK). Residues 155-166 (IKSTSSAENNSL) are compositionally biased toward polar residues. Positions 174–186 (PSPRPRSMLKKKS) are enriched in basic residues. Residues 184–210 (KKSHMEEKDGLEDKETALSEELELHSA) are a coiled coil. A compositionally biased stretch (basic and acidic residues) spans 187-200 (HMEEKDGLEDKETA). Composition is skewed to polar residues over residues 210-219 (APSSLPTPNG) and 239-249 (CLTSLASSSLK). Residues 268 to 287 (DPNEEITENHNSLKSDENKE) are compositionally biased toward basic and acidic residues. The stretch at 298–328 (AVEKSKESQVTADDLEEEKAKAELIMDDDRT) forms a coiled coil. Positions 365-374 (NNRASSASAR) are enriched in low complexity. A coiled-coil region spans residues 443–628 (MHRIKRIESE…KQKKRHSFLE (186 aa)).

In terms of assembly, binds to purified microtubules via its C-terminus.

The protein localises to the cytoplasm. It localises to the cytoskeleton. Its subcellular location is the spindle. In terms of biological role, involved in organization of the bipolar mitotic spindle. Required for bipolar spindle assembly, mitosis progression and cytokinesis. May act by stabilizing interphase microtubules. This chain is Microtubule-associated protein 9 (MAP9), found in Homo sapiens (Human).